Consider the following 270-residue polypeptide: tRNA pseudouridine synthase A (270 aa).

Residue Asp-52 is the Nucleophile of the active site. Tyr-110 contributes to the substrate binding site.

Belongs to the tRNA pseudouridine synthase TruA family. In terms of assembly, homodimer.

It catalyses the reaction uridine(38/39/40) in tRNA = pseudouridine(38/39/40) in tRNA. Its function is as follows. Formation of pseudouridine at positions 38, 39 and 40 in the anticodon stem and loop of transfer RNAs. The protein is tRNA pseudouridine synthase A of Roseiflexus castenholzii (strain DSM 13941 / HLO8).